A 1192-amino-acid chain; its full sequence is DNA ligase 1 (1192 aa).

Disordered stretches follow at residues 29–257 and 280–517; these read ELNK…KEKE and EKEL…KSTQ. Basic and acidic residues predominate over residues 42-56; the sequence is EAVVKEKVEKKEKKE. Over residues 70 to 113 the composition is skewed to acidic residues; sequence EEEEEEQEEQDGEEEQEEEEEYQQQDEEIEEDINGEEEMELDEN. A compositionally biased stretch (basic and acidic residues) spans 141 to 155; sequence KTIENKETKKPEKQS. Acidic residues predominate over residues 172-198; it reads DDEEDEEDENKTDDNDLDDMLDDDSDN. Basic and acidic residues-rich tracts occupy residues 199-257 and 280-368; these read EKDS…KEKE and EKEL…RANA. Low complexity-rich tracts occupy residues 371–382 and 410–434; these read KSSVPTSTSKNS and STTTTTTTTTTSTATTISSKSISSP. The segment covering 435 to 467 has biased composition (basic and acidic residues); the sequence is SKKEEKEVITSKKQVEATKVEVKKEKEKEKEKE. Residues 468–511 show a composition bias toward acidic residues; that stretch reads KEDDEEEEEEEEDDDEKLEDIDEEEYEEEEEEDEEGISENEEEE. The segment at 724–733 is interaction with target DNA; that stretch reads KLRIGLAERS. Glutamate 842 lines the ATP pocket. Residue lysine 844 is the N6-AMP-lysine intermediate of the active site. Residues arginine 849 and arginine 865 each contribute to the ATP site. Position 897 (glutamate 897) interacts with Mg(2+). An interaction with target DNA region spans residues 918-920; that stretch reads ARK. Mg(2+) is bound at residue glutamate 996. Residues lysine 1001, arginine 1014, and lysine 1020 each coordinate ATP. The segment at 1157-1192 is disordered; sequence DKSPEDATSSDQVVDMYQNQKINSQSSKINEKDEDY. Polar residues predominate over residues 1162–1184; the sequence is DATSSDQVVDMYQNQKINSQSSK.

It belongs to the ATP-dependent DNA ligase family. Requires Mg(2+) as cofactor.

The protein localises to the nucleus. The catalysed reaction is ATP + (deoxyribonucleotide)n-3'-hydroxyl + 5'-phospho-(deoxyribonucleotide)m = (deoxyribonucleotide)n+m + AMP + diphosphate.. Functionally, DNA ligase that seals nicks in double-stranded DNA during DNA replication, DNA recombination and DNA repair. The protein is DNA ligase 1 (lig1) of Dictyostelium discoideum (Social amoeba).